A 65-amino-acid chain; its full sequence is Large ribosomal subunit protein bL35 (65 aa).

Positions methionine 1–lysine 23 are disordered.

This sequence belongs to the bacterial ribosomal protein bL35 family.

In Clostridium perfringens (strain ATCC 13124 / DSM 756 / JCM 1290 / NCIMB 6125 / NCTC 8237 / Type A), this protein is Large ribosomal subunit protein bL35.